We begin with the raw amino-acid sequence, 418 residues long: Lactosylceramide alpha-2,3-sialyltransferase (418 aa).

Residues 1–25 (MRTKAAGCAERRPLQPRTEAAAAPA) form a disordered region. The Cytoplasmic portion of the chain corresponds to 1–61 (MRTKAAGCAE…RAQSKMRRPS (61 aa)). Residues 62-82 (LLLKDILKCTLLVFGVWILYI) form a helical; Signal-anchor for type II membrane protein membrane-spanning segment. Over 83–418 (LKLNYTTEEC…DLSGGIDREF (336 aa)) the chain is Lumenal. 3 N-linked (GlcNAc...) asparagine glycosylation sites follow: asparagine 86, asparagine 236, and asparagine 390. A disulfide bridge connects residues cysteine 195 and cysteine 353.

It belongs to the glycosyltransferase 29 family. Post-translationally, N-glycosylated. In terms of tissue distribution, ubiquitous. High expression in brain, skeletal muscle, placenta, and testis. mRNA widely distributed in human brain, but slightly elevated expression was observed in the cerebral cortex, temporal lobe, and putamen.

The protein localises to the golgi apparatus membrane. The catalysed reaction is a beta-D-Gal-(1-&gt;4)-beta-D-Glc-(1&lt;-&gt;1)-Cer(d18:1(4E)) + CMP-N-acetyl-beta-neuraminate = a ganglioside GM3 (d18:1(4E)) + CMP + H(+). It catalyses the reaction ganglioside GA2 (d18:1(4E)/18:0) + CMP-N-acetyl-beta-neuraminate = ganglioside GM2 (d18:1(4E)/18:0) + CMP + H(+). The enzyme catalyses a beta-D-Gal-(1&lt;-&gt;1')-ceramide + CMP-N-acetyl-beta-neuraminate = N-acetyl-alpha-neuraminosyl-(2-&gt;3)-beta-D-galactosyl-(1&lt;-&gt;1')-ceramide + CMP + H(+). It carries out the reaction a beta-D-galactosyl-(1&lt;-&gt;1')-N-acylsphing-4-enine + CMP-N-acetyl-beta-neuraminate = a ganglioside GM4 (d18:1(4E)) + CMP + H(+). The catalysed reaction is ganglioside GA1 (d18:1(4E)/18:0) + CMP-N-acetyl-beta-neuraminate = ganglioside GM1 (d18:1(4E)/18:0) + CMP + H(+). The protein operates within glycolipid biosynthesis. Functionally, transfers the sialyl group (N-acetyl-alpha-neuraminyl or NeuAc) from CMP-NeuAc to the non-reducing terminal galactose (Gal) of glycosphingolipids forming gangliosides (important molecules involved in the regulation of multiple cellular processes, including cell proliferation and differentiation, apoptosis, embryogenesis, development, and oncogenesis). Mainly involved in the biosynthesis of ganglioside GM3 but can also use different glycolipids as substrate acceptors such as D-galactosylceramide (GalCer), asialo-GM2 (GA2) and asialo-GM1 (GA1), although less preferentially than beta-D-Gal-(1-&gt;4)-beta-D-Glc-(1&lt;-&gt;1)-Cer (LacCer). The chain is Lactosylceramide alpha-2,3-sialyltransferase (ST3GAL5) from Homo sapiens (Human).